Here is a 517-residue protein sequence, read N- to C-terminus: Cytochrome b mRNA maturase bI3 (517 aa).

At methionine 1 to asparagine 31 the chain is on the mitochondrial matrix side. Positions methionine 1–phenylalanine 169 are cytochrome b. A helical membrane pass occupies residues methionine 32–methionine 52. At histidine 53–asparagine 84 the chain is on the mitochondrial intermembrane side. Residues glycine 85–serine 105 traverse the membrane as a helical segment. Topologically, residues tyrosine 106–asparagine 115 are mitochondrial matrix. A helical membrane pass occupies residues valine 116 to tyrosine 136. The Mitochondrial intermembrane segment spans residues glycine 137–threonine 145. Residues valine 146–tryptophan 166 form a helical membrane-spanning segment. At glycine 167–serine 184 the chain is on the mitochondrial matrix side. A maturase region spans residues asparagine 170–tyrosine 517. Residues valine 185 to tyrosine 205 form a helical membrane-spanning segment. The Mitochondrial intermembrane segment spans residues asparagine 206–lysine 224. A helical transmembrane segment spans residues leucine 225 to tyrosine 242. At serine 243–tyrosine 517 the chain is on the mitochondrial matrix side.

It in the N-terminal section; belongs to the cytochrome b family. The protein in the C-terminal section; belongs to the LAGLIDADG endonuclease family. Forms a ribonucleoprotein complex composed of maturase bI3 and 2 dimers of MRS1 that assemble around the bI3 RNA.

The protein localises to the mitochondrion inner membrane. In terms of biological role, mitochondrial mRNA maturase required for splicing of intron 3 of the cytochrome b (COB) gene, containing its own coding sequence. In vivo splicing requires the formation of a ribonucleoprotein complex together with the imported mitochondrial RNA-splicing protein MRS1. The complex seems to stimulate the intrinsic ribozyme activity of intron bI3 through binding to and stabilizing specific secondary and tertiary structure elements in the RNA. This Saccharomyces cerevisiae (strain ATCC 204508 / S288c) (Baker's yeast) protein is Cytochrome b mRNA maturase bI3 (BI3).